A 78-amino-acid chain; its full sequence is Large ribosomal subunit protein uL10 (78 aa).

The segment covering Ala-40–Ala-50 has biased composition (low complexity). The segment at Ala-40–His-78 is disordered. Residues Glu-51 to Glu-64 are compositionally biased toward basic and acidic residues.

This sequence belongs to the universal ribosomal protein uL10 family. P0 forms a pentameric complex by interaction with dimers of P1 and P2.

It is found in the nucleus. The protein resides in the cytoplasm. Its function is as follows. Ribosomal protein P0 is the functional equivalent of E.coli protein L10. This chain is Large ribosomal subunit protein uL10, found in Culicoides nubeculosus (Biting midge).